We begin with the raw amino-acid sequence, 397 residues long: Acetate kinase 2 (397 aa).

Asparagine 8 is a Mg(2+) binding site. ATP is bound at residue lysine 15. Arginine 89 contributes to the substrate binding site. Catalysis depends on aspartate 146, which acts as the Proton donor/acceptor. Residues 206–210, 281–283, and 329–333 each bind ATP; these read HLGNG, DFR, and GVGEN. Glutamate 380 serves as a coordination point for Mg(2+).

The protein belongs to the acetokinase family. As to quaternary structure, homodimer. It depends on Mg(2+) as a cofactor. Requires Mn(2+) as cofactor.

Its subcellular location is the cytoplasm. It carries out the reaction acetate + ATP = acetyl phosphate + ADP. It functions in the pathway metabolic intermediate biosynthesis; acetyl-CoA biosynthesis; acetyl-CoA from acetate: step 1/2. In terms of biological role, catalyzes the formation of acetyl phosphate from acetate and ATP. Can also catalyze the reverse reaction. This chain is Acetate kinase 2, found in Listeria monocytogenes serovar 1/2a (strain ATCC BAA-679 / EGD-e).